The primary structure comprises 141 residues: Large ribosomal subunit protein uL14 (141 aa).

It belongs to the universal ribosomal protein uL14 family.

The chain is Large ribosomal subunit protein uL14 (RPL23) from Tetrahymena thermophila (strain SB210).